Consider the following 359-residue polypeptide: Cytoplasmic tRNA 2-thiolation protein 1 (359 aa).

Belongs to the TtcA family. CTU1/NCS6/ATPBD3 subfamily. As to quaternary structure, interacts with NCS2 and URM1. May act by forming a heterodimer with NCS2. Component of a large molecular weight complex of more than 250 kDa.

It is found in the cytoplasm. The protein localises to the mitochondrion. Its pathway is tRNA modification; 5-methoxycarbonylmethyl-2-thiouridine-tRNA biosynthesis. In terms of biological role, plays a central role in 2-thiolation of mcm(5)S(2)U at tRNA wobble positions of tRNA(Lys), tRNA(Glu) and tRNA(Gln). Directly binds tRNAs and probably acts by catalyzing adenylation of tRNAs, an intermediate required for 2-thiolation. It is unclear whether it acts as a sulfurtransferase that transfers sulfur from thiocarboxylated URM1 onto the uridine of tRNAs at wobble position. Prior mcm(5) tRNA modification by the elongator complex is required for 2-thiolation. May also be involved in protein urmylation. The sequence is that of Cytoplasmic tRNA 2-thiolation protein 1 from Saccharomyces cerevisiae (strain RM11-1a) (Baker's yeast).